A 440-amino-acid polypeptide reads, in one-letter code: Protein OSB3, chloroplastic/mitochondrial (440 aa).

Residues 1-61 (MNLISRTLTR…AKVSVKPPLN (61 aa)) constitute a chloroplast and mitochondrion transit peptide. The SSB domain occupies 80–178 (ISNWINLIGF…VMVQNLNFVQ (99 aa)). 3 PDF region regions span residues 218–270 (WKHL…LKLE), 294–342 (WKDL…SKLP), and 380–428 (WKNL…SKLP).

In terms of tissue distribution, expressed primarily in the female gametophyte and in the floral abscission zone.

It is found in the mitochondrion. The protein localises to the plastid. It localises to the chloroplast. In terms of biological role, binds single-stranded DNA. The chain is Protein OSB3, chloroplastic/mitochondrial (OSB3) from Arabidopsis thaliana (Mouse-ear cress).